The chain runs to 65 residues: Protein translocase subunit SecE (65 aa).

Residues 1-27 (MEKLKEFLKGVRDELKRVVWPSRELVV) are Cytoplasmic-facing. A helical transmembrane segment spans residues 28–59 (KATISVIIFSLAIGVYLWILDLTFTKIISFIL). Residues 60-65 (SLRGSL) lie on the Periplasmic side of the membrane.

It belongs to the SecE/SEC61-gamma family. As to quaternary structure, component of the Sec protein translocase complex. Heterotrimer consisting of SecY, SecE and SecG subunits. The heterotrimers can form oligomers, although 1 heterotrimer is thought to be able to translocate proteins. Interacts with SecDF, and other proteins may be involved. The channel interacts with SecA via subunit SecY.

It is found in the cell inner membrane. Its function is as follows. Essential subunit of the protein translocation channel SecYEG. Clamps together the 2 halves of SecY. May contact the channel plug during translocation. In Aquifex aeolicus (strain VF5), this protein is Protein translocase subunit SecE.